The following is a 312-amino-acid chain: Small ribosomal subunit protein RACK1 (312 aa).

WD repeat units follow at residues 9-42, 63-93, 105-135, 148-180, 192-222, 233-262, and 279-307; these read GHRG…ISWK, GHTG…RMWD, KHTK…RVWN, GHED…KVWN, GHSN…LLWD, NVES…SVYD, and PSEC…RVWS.

The protein belongs to the WD repeat G protein beta family. Ribosomal protein RACK1 subfamily.

This chain is Small ribosomal subunit protein RACK1, found in Leishmania major.